The chain runs to 295 residues: Pyridoxal 5'-phosphate synthase subunit PdxS (295 aa).

Residue aspartate 25 coordinates D-ribose 5-phosphate. The active-site Schiff-base intermediate with D-ribose 5-phosphate is lysine 82. Glycine 154 lines the D-ribose 5-phosphate pocket. Residue arginine 166 participates in D-glyceraldehyde 3-phosphate binding. Residues glycine 215 and 236–237 (GS) contribute to the D-ribose 5-phosphate site.

This sequence belongs to the PdxS/SNZ family. As to quaternary structure, in the presence of PdxT, forms a dodecamer of heterodimers.

It catalyses the reaction aldehydo-D-ribose 5-phosphate + D-glyceraldehyde 3-phosphate + L-glutamine = pyridoxal 5'-phosphate + L-glutamate + phosphate + 3 H2O + H(+). It participates in cofactor biosynthesis; pyridoxal 5'-phosphate biosynthesis. Its function is as follows. Catalyzes the formation of pyridoxal 5'-phosphate from ribose 5-phosphate (RBP), glyceraldehyde 3-phosphate (G3P) and ammonia. The ammonia is provided by the PdxT subunit. Can also use ribulose 5-phosphate and dihydroxyacetone phosphate as substrates, resulting from enzyme-catalyzed isomerization of RBP and G3P, respectively. In Heliobacterium modesticaldum (strain ATCC 51547 / Ice1), this protein is Pyridoxal 5'-phosphate synthase subunit PdxS.